The chain runs to 209 residues: Imidazole glycerol phosphate synthase subunit HisH (209 aa).

The region spanning 1–205 (MIAIIDYGMG…KGVVETWKSS (205 aa)) is the Glutamine amidotransferase type-1 domain. Cys79 (nucleophile) is an active-site residue. Residues His180 and Glu182 contribute to the active site.

In terms of assembly, heterodimer of HisH and HisF.

The protein localises to the cytoplasm. It carries out the reaction 5-[(5-phospho-1-deoxy-D-ribulos-1-ylimino)methylamino]-1-(5-phospho-beta-D-ribosyl)imidazole-4-carboxamide + L-glutamine = D-erythro-1-(imidazol-4-yl)glycerol 3-phosphate + 5-amino-1-(5-phospho-beta-D-ribosyl)imidazole-4-carboxamide + L-glutamate + H(+). The enzyme catalyses L-glutamine + H2O = L-glutamate + NH4(+). It functions in the pathway amino-acid biosynthesis; L-histidine biosynthesis; L-histidine from 5-phospho-alpha-D-ribose 1-diphosphate: step 5/9. Functionally, IGPS catalyzes the conversion of PRFAR and glutamine to IGP, AICAR and glutamate. The HisH subunit catalyzes the hydrolysis of glutamine to glutamate and ammonia as part of the synthesis of IGP and AICAR. The resulting ammonia molecule is channeled to the active site of HisF. This Bacillus thuringiensis (strain Al Hakam) protein is Imidazole glycerol phosphate synthase subunit HisH.